We begin with the raw amino-acid sequence, 714 residues long: Angiogenic factor with G patch and FHA domains 1 (714 aa).

Residues 1–18 show a composition bias toward pro residues; it reads MASEAPSPPRSPPPPTSP. 3 disordered regions span residues 1 to 22, 259 to 307, and 322 to 384; these read MASE…EPEL, QPYP…HTSC, and IGIH…SYDE. An N-acetylalanine modification is found at alanine 2. 2 positions are modified to phosphoserine: serine 7 and serine 11. Residues 18–88 adopt a coiled-coil conformation; sequence PEPELAQLRR…QRGRNEDNKK (71 aa). Positions 279–298 are enriched in basic and acidic residues; sequence KDPDSSATNEEKDLNSEDQK. The segment covering 335-355 has biased composition (polar residues); sequence VPTSGNTIESPLHENISNSTS. Serine 344 is modified (phosphoserine). The segment covering 364–383 has biased composition (acidic residues); sequence TDSEPEEGEITDSQTEDSYD. Residues 434–487 form the FHA domain; sequence ATIGREKDMEHTLRIPEVGVSKFHAEIYFDHDLQSYVLVDQGSQNGTIVNGKQI. Over residues 586–609 the composition is skewed to basic and acidic residues; the sequence is KYKDRAGKRREQVGSEGTFQRDDA. Disordered regions lie at residues 586–617 and 655–714; these read KYKD…HSEI and RTHA…GTLE. The G-patch domain occupies 619-665; that stretch reads DSNKGRKMLEKMGWKKGEGLGKDGGGMKTPIQLQLRRTHAGLGTGKP. Lysine 664 bears the N6-acetyllysine mark. A compositionally biased stretch (basic and acidic residues) spans 680–690; it reads KNWDKARERFT.

As to quaternary structure, interacts with the secreted angiogenic factor TNFSF12. In terms of tissue distribution, widely expressed. Expressed in endothelial cells, vascular smooth muscle cells and osteoblasts. Expressed in umbilical vein endothelial cells and microvascular endothelial cells.

It localises to the cytoplasm. Its subcellular location is the secreted. Its function is as follows. Promotes angiogenesis and the proliferation of endothelial cells. Able to bind to endothelial cells and promote cell proliferation, suggesting that it may act in an autocrine fashion. In Homo sapiens (Human), this protein is Angiogenic factor with G patch and FHA domains 1 (AGGF1).